Here is a 449-residue protein sequence, read N- to C-terminus: Pectate lyase L (449 aa).

The signal sequence occupies residues 1–26; sequence MFKRNDRSKNGFNALRLGVSFVLASS. Cysteine 27 carries the N-palmitoyl cysteine lipid modification. Cysteine 27 carries S-diacylglycerol cysteine lipidation. PbH1 repeat units follow at residues 158 to 179, 180 to 202, 213 to 242, 245 to 267, 274 to 308, 336 to 358, and 359 to 391; these read GDFWLVKGLEVKGAGDNGIYIG, GSNNRIENVETHHNRDTGLQLGR, PANNLILNSYSHDNADPDNGEDADGFAAKL, GSGNVFDNCLAAYNVDDGWDLYS, IGAVTILNSVAHHNGQTSDGTSTANSDGNGFKLGG, PGTITLTNNTSWDNGQSNFAFDK, and GEHVFINNLSFEGTASDKTSGTDQDNSNVWWKN. Ca(2+) contacts are provided by aspartate 236, aspartate 260, aspartate 261, and aspartate 264. Catalysis depends on lysine 305, which acts as the Proton acceptor.

It belongs to the polysaccharide lyase 9 family. Ca(2+) serves as cofactor.

Its subcellular location is the secreted. It carries out the reaction Eliminative cleavage of (1-&gt;4)-alpha-D-galacturonan to give oligosaccharides with 4-deoxy-alpha-D-galact-4-enuronosyl groups at their non-reducing ends.. With respect to regulation, activated in presence of the surfactant polysorbate 20, while inhibited in the presence of polysorbate 40, polysorbate 60, polysorbate 80, Triton X-100 and sodium dodecyl sulfate. Inhibited by the metal chelator ethylenediaminetetraacetic acid (EDTA). Inhibited by iron and cobalt ions. Presents an endo-cleaving activity on the homogalacturonan (HG) region in pectin with a preference for low- or unmethylated pectin. This is Pectate lyase L from Paenibacillus polymyxa (strain SC2) (Bacillus polymyxa).